Here is a 185-residue protein sequence, read N- to C-terminus: Large ribosomal subunit protein uL5 (185 aa).

The protein belongs to the universal ribosomal protein uL5 family. As to quaternary structure, part of the 50S ribosomal subunit; part of the 5S rRNA/L5/L18/L25 subcomplex. Contacts the 5S rRNA and the P site tRNA. Forms a bridge to the 30S subunit in the 70S ribosome.

This is one of the proteins that bind and probably mediate the attachment of the 5S RNA into the large ribosomal subunit, where it forms part of the central protuberance. In the 70S ribosome it contacts protein S13 of the 30S subunit (bridge B1b), connecting the 2 subunits; this bridge is implicated in subunit movement. Contacts the P site tRNA; the 5S rRNA and some of its associated proteins might help stabilize positioning of ribosome-bound tRNAs. This Streptomyces coelicolor (strain ATCC BAA-471 / A3(2) / M145) protein is Large ribosomal subunit protein uL5.